Reading from the N-terminus, the 81-residue chain is Small ribosomal subunit protein bS16c (81 aa).

It belongs to the bacterial ribosomal protein bS16 family.

The protein localises to the plastid. It is found in the chloroplast. The protein is Small ribosomal subunit protein bS16c of Emiliania huxleyi (Coccolithophore).